Here is a 353-residue protein sequence, read N- to C-terminus: UDP-N-acetylenolpyruvoylglucosamine reductase (353 aa).

The 171-residue stretch at 31-201 (LASHAPAFVA…GSVRFALPRP (171 aa)) folds into the FAD-binding PCMH-type domain. Residue R177 is part of the active site. Catalysis depends on S250, which acts as the Proton donor. E346 is a catalytic residue.

Belongs to the MurB family. The cofactor is FAD.

Its subcellular location is the cytoplasm. It catalyses the reaction UDP-N-acetyl-alpha-D-muramate + NADP(+) = UDP-N-acetyl-3-O-(1-carboxyvinyl)-alpha-D-glucosamine + NADPH + H(+). It functions in the pathway cell wall biogenesis; peptidoglycan biosynthesis. Its function is as follows. Cell wall formation. This is UDP-N-acetylenolpyruvoylglucosamine reductase from Bordetella parapertussis (strain 12822 / ATCC BAA-587 / NCTC 13253).